The chain runs to 301 residues: Probable alpha-L-glutamate ligase (301 aa).

The region spanning 104 to 287 (LQLLSRKGIG…VADMIFEFIE (184 aa)) is the ATP-grasp domain. Residues Lys141, 178-179 (EF), Asp187, and 211-213 (RSN) each bind ATP. Mg(2+)-binding residues include Asp248, Glu260, and Asn262. Asp248, Glu260, and Asn262 together coordinate Mn(2+).

The protein belongs to the RimK family. Mg(2+) serves as cofactor. The cofactor is Mn(2+).

This chain is Probable alpha-L-glutamate ligase, found in Vibrio atlanticus (strain LGP32) (Vibrio splendidus (strain Mel32)).